Reading from the N-terminus, the 127-residue chain is Phospholipase A2 homolog otoconin-22 (127 aa).

Asn20 is a glycosylation site (N-linked (GlcNAc...) asparagine). Disulfide bonds link Cys26–Cys120, Cys28–Cys44, Cys43–Cys99, Cys49–Cys127, Cys50–Cys92, Cys59–Cys85, and Cys78–Cys90. N-linked (GlcNAc...) asparagine glycosylation occurs at Asn113.

The protein belongs to the phospholipase A2 family. In terms of assembly, monomer. In terms of tissue distribution, otoconial membrane in the maculae of the saccule and utricle. Otoconia are composites of proteins and inorganic crystals formed in the peripheral portion of the vestibular system of vertebrates. The otoconial membranes contain small crystals of calcium carbonate known as otoliths (ear stones) if there is a single deposit or as otoconia (ear dust) if there are many. Each mineral polymorph of otoconia has a protein unique to that polymorph.

The protein resides in the secreted. Functionally, major protein of the aragonitic otoconia. It is unlikely that this protein has phospholipase A2 activity. The sequence is that of Phospholipase A2 homolog otoconin-22 from Xenopus laevis (African clawed frog).